The primary structure comprises 116 residues: Diuretic hormone class 2 (116 aa).

Residues 1–25 form the signal peptide; sequence MTNRCACFALAFLLFCLLAISSIEA. Positions 26–75 are excised as a propeptide; sequence APMPSQSNGGYGGAGYNELEEVPDDLLMELMTRFGRTIIRARNDLENSKR. Pro106 is modified (proline amide). Positions 112 to 116 are excised as a propeptide; the sequence is SETDV.

The protein localises to the secreted. In terms of biological role, regulation of fluid secretion. Stimulates Malpighian tubules fluid secretion by activating the apical membrane V-ATPase via cyclic AMP of principal cells in the main secretory segment. The sequence is that of Diuretic hormone class 2 (Dh31) from Drosophila melanogaster (Fruit fly).